We begin with the raw amino-acid sequence, 776 residues long: Cullin-1 (776 aa).

An Omega-N-methylarginine modification is found at arginine 63. Residues 706-766 form the Cullin neddylation domain; it reads DRKLLIQAAI…IEKEYLERVD (61 aa). Residue lysine 720 forms a Glycyl lysine isopeptide (Lys-Gly) (interchain with G-Cter in NEDD8) linkage.

Belongs to the cullin family. Component of multiple Cul1-RING E3 ubiquitin-protein ligase complexes commonly known as SCF (SKP1-CUL1-F-box) complexes, consisting of CUL1, SKP1, RBX1 and a variable F-box domain-containing protein as substrate-specific subunit. Component of the SCF(FBXW11) complex containing FBXW11. Component of the SCF(SKP2) complex containing SKP2, in which it interacts directly with SKP1, SKP2 and RBX1. Component of the SCF(FBXW2) complex containing FBXW2. Component of the SCF(FBXO32) complex containing FBXO32. Component of the probable SCF(FBXO7) complex containing FBXO7. Component of the SCF(FBXO10) complex containing FBXO10. Component of the SCF(FBXO11) complex containing FBXO11. Component of the SCF(FBXO25) complex containing FBXO25. Component of the SCF(FBXO33) complex containing FBXO33. Component of the probable SCF(FBXO4) complex containing FBXO4. Component of the SCF(FBXO44) complex, composed of SKP1, CUL1 and FBXO44. Component of the SCF(BTRC) complex, composed of SKP1, CUL1 and BTRC. This complex binds phosphorylated NFKBIA. Part of a SCF complex consisting of CUL1, RBX1, SKP1 and FBXO2. Component of a SCF(SKP2)-like complex containing CUL1, SKP1, TRIM21 and SKP2. Component of the SCF(FBXO17) complex, composed of SKP1, CUL1 and FBXO17. Component of the SCF(FBXO27) complex, composed of SKP1, CUL1 and FBXO27. Component of the SCF(CCNF) complex consisting of CUL1, RBX1, SKP1 and CCNF. Interacts with CCNF. Component of the SCF(FBXL3) complex composed of CUL1, SKP1, RBX1 and FBXL3. Component of the SCF(FBXL21) complex composed of CUL1, SKP1, RBX1 and FBXL21. Component of the SCF(FBXO9) composed of CUL1, SKP1, RBX1 and FBXO9. Component of the SCF(FBXW7) composed of CUL1, SKP1, RBX1 and FBXW7. Component of the SCF(FBXO31) complex composed of CUL1, SKP1, RBX1 and FBXO31. Interacts with CHEK2; mediates CHEK2 ubiquitination and regulates its function. Part of a complex with TIP120A/CAND1 and RBX1. The unneddylated form interacts with TIP120A/CAND1 and the interaction mediates the exchange of the F-box substrate-specific subunit. Can self-associate. Interacts with FBXW8. Interacts with RNF7. Interacts with TRIM21. Interacts with COPS2. Interacts with DCUN1D1 and UBE2M. Interacts with DCUN1D3. Interacts with DCUN1D4. Identified in a complex with RBX1 and GLMN. Interacts with CEP68 as part of the SCF(FBXW11) complex; the interaction is probably mediated by FBXW11 and the complex also contains CDK5RAP2 and PCNT. Interacts (when neddylated) with ARIH1; leading to activate the E3 ligase activity of ARIH1. Interacts with COPS9. Interacts with UBXN1. Interacts with KAT7, probably as part of an SCF complex; the interaction mediates KAT7 ubiquitination. Interacts with NOTCH2. Part of a complex that contains DCUN1D5, CUL1 and RBX1; this interaction is bridged by CUL1. Interacts (unneddylated form) with DCUN1D1, DCUN1D2, DCUN1D3, DCUN1D4 and DCUN1D5; these interactions promote the cullin neddylation. Interacts (via the C-terminal domain) with CUL7; the interaction seems to be mediated by FBXW8; it is likely specific to FBXW8, but not other F-box proteins. Interacts with UBR2, as part of SCF(BTRC) complex; the interaction mediates 'Lys-48'-linked ubiquitination of UBR2 and is regulated by DUSP22 in the T-cell receptor signaling pathway. In terms of assembly, (Microbial infection) Interacts with murine cytomegalovirus M48. Neddylated; which enhances the ubiquitination activity of SCF. Neddylation prevents binding of the inhibitor CAND1. Neddylation leads to structural rearrangment in the complex that allows interaction between the E2 ubiquitin-conjugating enzyme and the acceptor ubiquitin. Deneddylated via its interaction with the COP9 signalosome (CSN) complex. In terms of processing, (Microbial infection) Deneddylated by murine cytomegalovirus M48 leading to a S-phase-like environment that is required for efficient replication of the viral genome. As to expression, embryo fibroblasts and embryo preadipocytes.

The protein operates within protein modification; protein ubiquitination. Functionally, core component of multiple cullin-RING-based SCF (SKP1-CUL1-F-box protein) E3 ubiquitin-protein ligase complexes, which mediate the ubiquitination of proteins involved in cell cycle progression, signal transduction and transcription. SCF complexes and ARIH1 collaborate in tandem to mediate ubiquitination of target proteins. In the SCF complex, serves as a rigid scaffold that organizes the SKP1-F-box protein and RBX1 subunits. May contribute to catalysis through positioning of the substrate and the ubiquitin-conjugating enzyme. The E3 ubiquitin-protein ligase activity of the complex is dependent on the neddylation of the cullin subunit and exchange of the substrate recognition component is mediated by TIP120A/CAND1. The functional specificity of the SCF complex depends on the F-box protein as substrate recognition component. SCF(BTRC) and SCF(FBXW11) direct ubiquitination of CTNNB1 and participate in Wnt signaling. SCF(FBXW11) directs ubiquitination of phosphorylated NFKBIA. SCF(BTRC) directs ubiquitination of NFKBIB, NFKBIE, ATF4, SMAD3, SMAD4, CDC25A, FBXO5 and probably NFKB2. SCF(BTRC) and/or SCF(FBXW11) direct ubiquitination of CEP68. SCF(SKP2) directs ubiquitination of phosphorylated CDKN1B/p27kip and is involved in regulation of G1/S transition. SCF(SKP2) directs ubiquitination of ORC1, CDT1, RBL2, ELF4, CDKN1A, RAG2, FOXO1A, and probably MYC and TAL1. SCF(FBXW7) directs ubiquitination of cyclin E, NOTCH1 released notch intracellular domain (NICD), and probably PSEN1. SCF(FBXW2) directs ubiquitination of GCM1. SCF(FBXO32) directs ubiquitination of MYOD1. SCF(FBXO7) directs ubiquitination of BIRC2 and DLGAP5. SCF(FBXO33) directs ubiquitination of YBX1. SCF(FBXO1) directs ubiquitination of BCL6 and DTL but does not seem to direct ubiquitination of TP53. SCF(BTRC) mediates the ubiquitination of NFKBIA at 'Lys-21' and 'Lys-22'; the degradation frees the associated NFKB1-RELA dimer to translocate into the nucleus and to activate transcription. SCF(CCNF) directs ubiquitination of CCP110. SCF(FBXL3) and SCF(FBXL21) direct ubiquitination of CRY1 and CRY2. SCF(FBXO9) directs ubiquitination of TTI1 and TELO2. SCF(FBXO10) directs ubiquitination of BCL2. Neddylated CUL1-RBX1 ubiquitinates p53/TP53 recruited by Cul7-RING(FBXW8) complex. SCF(BTRC) directs 'Lys-48'-linked ubiquitination of UBR2 in the T-cell receptor signaling pathway. The SCF(FBXO31) protein ligase complex specifically mediates the ubiquitination of proteins amidated at their C-terminus in response to oxidative stress. The sequence is that of Cullin-1 (Cul1) from Mus musculus (Mouse).